The following is a 98-amino-acid chain: Large ribosomal subunit protein uL23 (98 aa).

It belongs to the universal ribosomal protein uL23 family. Part of the 50S ribosomal subunit. Contacts protein L29, and trigger factor when it is bound to the ribosome.

In terms of biological role, one of the early assembly proteins it binds 23S rRNA. One of the proteins that surrounds the polypeptide exit tunnel on the outside of the ribosome. Forms the main docking site for trigger factor binding to the ribosome. The sequence is that of Large ribosomal subunit protein uL23 from Bordetella avium (strain 197N).